Consider the following 632-residue polypeptide: MSYFAGEFDVAVIGAGHAGCEAALASARLGVSTVVFATDLASVAMMPCNPNIGGTAKGHLVREIDALGGEMGINIDHTYIQSRMLNTSKGPAVHSLRAQADKRKYAERMKHVLETTDNLHLKQAEIIKVDIEDSKVKGVLTKNGAYYKVKAAILCTGVYLKSRIIIGDINYEGGPSGLAPANMLSQSLIESGIKITRFKTGTPARINRRTVDFSKMIEQKGDENIVPFSFMSENIEREQISCYLTYSGDETKKVVLENIDRSPLYNGSIKSVGPRYCPSFEDKIMRFPEKDKHQIFIEPEGENTEEMYVGGMSSSLPEDVQLKMLRSVPGLENAEMMRTAYAIEYDCIDPTQLELSLEFKDIDGLFSAGQMNGSSGYEEAGCQGLIAGINAALKLQGKEPLILKRSDAYIGVLIDDLVTKGTQEPYRMMTSRAEYRLLLRQDNADLRLTEMGHKIGLVKEDRYERFTKRKTAIEDEIERLKNIQITNKQEVNKFLEGLNSAGLKKPISLYELIKRPELNYFVVKDLDKDRAELPRDVQEQVNIISKYEGYIQKQLEQVEQFKKLENRLIPKEFDYKLVKGLRTEAIQKLDKIKPVNIGQASRISGVSPADISVLLIVLEQYNRNKGHKEEEF.

Residue Gly-14 to Gly-19 participates in FAD binding. Position 273-287 (Gly-273–Phe-287) interacts with NAD(+).

This sequence belongs to the MnmG family. As to quaternary structure, homodimer. Heterotetramer of two MnmE and two MnmG subunits. The cofactor is FAD.

The protein resides in the cytoplasm. NAD-binding protein involved in the addition of a carboxymethylaminomethyl (cmnm) group at the wobble position (U34) of certain tRNAs, forming tRNA-cmnm(5)s(2)U34. This chain is tRNA uridine 5-carboxymethylaminomethyl modification enzyme MnmG, found in Clostridium novyi (strain NT).